The sequence spans 66 residues: Photosystem II reaction center protein J (66 aa).

The tract at residues 1-25 is disordered; sequence MSGKKSPYPDGRIPDRNPDGTPAVP. Residues 37–57 traverse the membrane as a helical segment; sequence LWLVATAGGMAVLFVVGLFFY.

Belongs to the PsbJ family. In terms of assembly, PSII is composed of 1 copy each of membrane proteins PsbA, PsbB, PsbC, PsbD, PsbE, PsbF, PsbH, PsbI, PsbJ, PsbK, PsbL, PsbM, PsbT, PsbX, PsbY, PsbZ, Psb30/Ycf12, peripheral proteins PsbO, CyanoQ (PsbQ), PsbU, PsbV and a large number of cofactors. It forms dimeric complexes.

It is found in the cellular thylakoid membrane. Its function is as follows. One of the components of the core complex of photosystem II (PSII). PSII is a light-driven water:plastoquinone oxidoreductase that uses light energy to abstract electrons from H(2)O, generating O(2) and a proton gradient subsequently used for ATP formation. It consists of a core antenna complex that captures photons, and an electron transfer chain that converts photonic excitation into a charge separation. The polypeptide is Photosystem II reaction center protein J (Synechococcus sp. (strain CC9605)).